Reading from the N-terminus, the 303-residue chain is Movement protein (303 aa).

It belongs to the tobamovirus movement protein family.

The protein localises to the host cytoplasm. The protein resides in the host cytoskeleton. It is found in the host cell junction. Its subcellular location is the host plasmodesma. Its function is as follows. Transports viral genome to neighboring plant cells directly through plasmosdesmata, without any budding. The movement protein allows efficient cell to cell propagation, by bypassing the host cell wall barrier. Forms a ribonucleoprotein complex with viral RNA. Binds microtubules and modulates microtubule stability. Can bind double-stranded DNA. The chain is Movement protein (MP) from Cymbidium (ORSV).